The primary structure comprises 679 residues: Glycine--tRNA ligase beta subunit (679 aa).

Belongs to the class-II aminoacyl-tRNA synthetase family. Tetramer of two alpha and two beta subunits.

It localises to the cytoplasm. It catalyses the reaction tRNA(Gly) + glycine + ATP = glycyl-tRNA(Gly) + AMP + diphosphate. The sequence is that of Glycine--tRNA ligase beta subunit from Streptococcus gordonii (strain Challis / ATCC 35105 / BCRC 15272 / CH1 / DL1 / V288).